Reading from the N-terminus, the 105-residue chain is Small ribosomal subunit protein bS20 (105 aa).

Belongs to the bacterial ribosomal protein bS20 family.

Functionally, binds directly to 16S ribosomal RNA. In Moorella thermoacetica (strain ATCC 39073 / JCM 9320), this protein is Small ribosomal subunit protein bS20.